The primary structure comprises 685 residues: Putative mannosyltransferase YycA (685 aa).

Transmembrane regions (helical) follow at residues 6–26, 68–88, 109–129, 154–174, 176–196, and 204–224; these read FDAA…YHIW, VLWI…SVII, FGVG…IAVA, AVKQ…GLAF, MKMM…LIAS, and IGSL…WAIA. The segment at 269–347 is disordered; the sequence is MNAAGGGNMQ…GGGGGKSVNM (79 aa). Residues 277–286 are compositionally biased toward polar residues; sequence MQNQDNMQAP. Positions 287-303 are enriched in low complexity; sequence NGNGSSFSQNGNQSFGN. Residues 318–343 show a composition bias toward gly residues; sequence LNGGGGTPPTGGNGPGNGGPGGGGGK. Helical transmembrane passes span 363-383, 399-419, 422-442, 455-475, 479-499, 513-533, and 573-593; these read LSGQ…GAII, TLFW…AGFF, YYLI…WYTM, YLLP…LSAY, IGSV…LALL, IISL…PLLY, and TGEE…YIIY. The disordered stretch occupies residues 652–685; sequence TSDEYSGSSSSTNSVQGMRRGPGGESQQTLYLVE. The span at 654–665 shows a compositional bias: low complexity; it reads DEYSGSSSSTNS. Positions 676–685 are enriched in polar residues; the sequence is ESQQTLYLVE.

The protein belongs to the glycosyltransferase 39 family.

It localises to the cell membrane. This is Putative mannosyltransferase YycA (yycA) from Bacillus subtilis (strain 168).